The sequence spans 329 residues: Beta-tectorin (329 aa).

Positions 1–17 (MVAVTVYLMVILAQAFA) are cleaved as a signal peptide. Positions 19-287 (PCTPNKADVI…VTCDKRKQRM (269 aa)) constitute a ZP domain. 4 N-linked (GlcNAc...) asparagine glycosylation sites follow: Asn-80, Asn-104, Asn-116, and Asn-145. Cys-204 and Cys-264 are oxidised to a cystine. Gly-304 carries the GPI-anchor amidated glycine lipid modification. Residues 305–329 (LSRFYMLSDVIFHLLFAIGFCAILL) constitute a propeptide, removed in mature form.

In terms of assembly, may form homomeric filament after self-association or heteromeric filament after association with alpha-tectorin. In terms of processing, the N-terminus is blocked. Post-translationally, N-glycosylated. The presence of a hydrophobic C-terminus preceded by a potential cleavage site strongly suggests that tectorins are synthesized as glycosylphosphatidylinositol-linked, membrane-bound precursors. Tectorins are targeted to the apical surface of the inner ear epithelia by the lipid and proteolytically released into the extracellular compartment. Exclusively expressed in the inner ear, where it is found in basilar papilla, clear cells, supporting cells, cuboidal cells and the lagena macula.

Its subcellular location is the cell membrane. It localises to the secreted. The protein resides in the extracellular space. The protein localises to the extracellular matrix. Functionally, one of the major non-collagenous components of the tectorial membrane. The tectorial membrane is an extracellular matrix of the inner ear that covers the neuroepithelium of the cochlea and contacts the stereocilia bundles of specialized sensory hair cells. Sound induces movement of these hair cells relative to the tectorial membrane, deflects the stereocilia and leads to fluctuations in hair-cell membrane potential, transducing sound into electrical signals. The polypeptide is Beta-tectorin (TECTB) (Gallus gallus (Chicken)).